We begin with the raw amino-acid sequence, 347 residues long: MKAIKLTGHERPLTQVKYNKEGDLLFSCSKDSSASVWYSLNGERLGTLDGHTGTIWSIDVDCFTKYCVTGSADYSIKLWDVSNGQCVATWKSPVPVKRVEFSPCGNYFLAILDNVMKNPGSINIYEIERDSATHELTKVSEEPIHKIITHEGLDAATVAGWSTKGKYIIAGHKDGKISKYDVSNNYEYVDSIDLHEKSISDMQFSPDLTYFITSSRDTNSFLVDVSTLQVLKKYETDCPLNTAVITPLKEFIILGGGQEAKDVTTTSANEGKFEARFYHKIFEEEIGRVQGHFGPLNTVAISPQGTSYASGGEDGFIRLHHFEKSYFDFKYDVEKAAEAKEHMQEAN.

5 WD repeats span residues 8-47 (GHER…RLGT), 50-89 (GHTG…CVAT), 149-190 (THEG…EYVD), 194-233 (LHEK…VLKK), and 291-330 (GHFG…FDFK). Ser-302 carries the phosphoserine modification.

This sequence belongs to the eIF-3 subunit I family. In terms of assembly, component of the eukaryotic translation initiation factor 3 (eIF-3) complex.

Its subcellular location is the cytoplasm. Component of the eukaryotic translation initiation factor 3 (eIF-3) complex, which is involved in protein synthesis of a specialized repertoire of mRNAs and, together with other initiation factors, stimulates binding of mRNA and methionyl-tRNAi to the 40S ribosome. The eIF-3 complex specifically targets and initiates translation of a subset of mRNAs involved in cell proliferation. The polypeptide is Eukaryotic translation initiation factor 3 subunit I (Saccharomyces cerevisiae (strain YJM789) (Baker's yeast)).